The sequence spans 120 residues: Putative pterin-4-alpha-carbinolamine dehydratase (120 aa).

It belongs to the pterin-4-alpha-carbinolamine dehydratase family.

The catalysed reaction is (4aS,6R)-4a-hydroxy-L-erythro-5,6,7,8-tetrahydrobiopterin = (6R)-L-erythro-6,7-dihydrobiopterin + H2O. The sequence is that of Putative pterin-4-alpha-carbinolamine dehydratase from Bdellovibrio bacteriovorus (strain ATCC 15356 / DSM 50701 / NCIMB 9529 / HD100).